A 503-amino-acid polypeptide reads, in one-letter code: Endoglycoceramidase (503 aa).

The N-terminal stretch at 1 to 21 is a signal peptide; that stretch reads MAETQPLVFVLMSISAILTAG. N-linked (GlcNAc...) asparagine glycosylation is found at N72, N108, and N205. E239 functions as the Proton donor in the catalytic mechanism. Residues N307, N409, and N485 are each glycosylated (N-linked (GlcNAc...) asparagine).

It belongs to the glycosyl hydrolase 5 (cellulase A) family.

Its subcellular location is the secreted. The protein localises to the nematocyst. The enzyme catalyses an oligoglycosyl-(1-&gt;4)-beta-D-glucosyl-(1&lt;-&gt;1)-ceramide + H2O = an oligoglycosyl-(1-&gt;4)-D-glucose + an N-acyl-sphingoid base. With respect to regulation, completely inhibited by Hg(2+). Cu(2+) and zinc have no effect on enzyme activity. Lithium, potassium, manganese, Ni(2+), calcium, magnesium and EDTA have no significant effect on enzyme activity. Enzyme requires presence of detergents such as Triton X-100 and Lubrol PX for the hydrolysis of glycosphingolipids. Taurodeoxycholate strongly inhibits the enzyme activity and SDS completely inhibits the enzyme activity. In terms of biological role, hydrolysis of the glycosidic linkage between oligosaccharides and ceramides of glycosphingolipids, especially b-series polysialogangliosides. The protein is Endoglycoceramidase of Cyanea nozakii (Jellyfish).